The primary structure comprises 78 residues: Small ribosomal subunit protein bS16c (78 aa).

This sequence belongs to the bacterial ribosomal protein bS16 family.

It is found in the plastid. Its subcellular location is the chloroplast. In Panax ginseng (Korean ginseng), this protein is Small ribosomal subunit protein bS16c.